Reading from the N-terminus, the 297-residue chain is tRNA-cytidine(32) 2-sulfurtransferase (297 aa).

The PP-loop motif motif lies at S61 to S66. Positions 136, 139, and 227 each coordinate [4Fe-4S] cluster.

The protein belongs to the TtcA family. Homodimer. Mg(2+) is required as a cofactor. It depends on [4Fe-4S] cluster as a cofactor.

The protein resides in the cytoplasm. The catalysed reaction is cytidine(32) in tRNA + S-sulfanyl-L-cysteinyl-[cysteine desulfurase] + AH2 + ATP = 2-thiocytidine(32) in tRNA + L-cysteinyl-[cysteine desulfurase] + A + AMP + diphosphate + H(+). It functions in the pathway tRNA modification. Catalyzes the ATP-dependent 2-thiolation of cytidine in position 32 of tRNA, to form 2-thiocytidine (s(2)C32). The sulfur atoms are provided by the cysteine/cysteine desulfurase (IscS) system. In Paracoccus denitrificans (strain Pd 1222), this protein is tRNA-cytidine(32) 2-sulfurtransferase.